The chain runs to 440 residues: tRNA-2-methylthio-N(6)-dimethylallyladenosine synthase (440 aa).

The 116-residue stretch at 2 to 117 (KGLYIKTYGC…LPELIVKASR (116 aa)) folds into the MTTase N-terminal domain. Residues Cys11, Cys47, Cys80, Cys157, Cys161, and Cys164 each coordinate [4Fe-4S] cluster. One can recognise a Radical SAM core domain in the interval 143–374 (NSQGSSAFLA…QELISKQQLE (232 aa)). Residues 377 to 440 (QSMIGKTIPV…RQNSLLGCAA (64 aa)) enclose the TRAM domain.

The protein belongs to the methylthiotransferase family. MiaB subfamily. As to quaternary structure, monomer. Requires [4Fe-4S] cluster as cofactor.

Its subcellular location is the cytoplasm. It carries out the reaction N(6)-dimethylallyladenosine(37) in tRNA + (sulfur carrier)-SH + AH2 + 2 S-adenosyl-L-methionine = 2-methylsulfanyl-N(6)-dimethylallyladenosine(37) in tRNA + (sulfur carrier)-H + 5'-deoxyadenosine + L-methionine + A + S-adenosyl-L-homocysteine + 2 H(+). Functionally, catalyzes the methylthiolation of N6-(dimethylallyl)adenosine (i(6)A), leading to the formation of 2-methylthio-N6-(dimethylallyl)adenosine (ms(2)i(6)A) at position 37 in tRNAs that read codons beginning with uridine. This is tRNA-2-methylthio-N(6)-dimethylallyladenosine synthase from Wolbachia pipientis subsp. Culex pipiens (strain wPip).